Here is a 427-residue protein sequence, read N- to C-terminus: Endothelin-1 receptor (427 aa).

The N-terminal stretch at 1–20 (METFWLRLSFWVALVGGVIS) is a signal peptide. Residues 21-80 (DNPESYSTNLSIHVDSVATFHGTELSFVVTTHQPTNLALPSNGSMHNYCPQQTKITSAFK) lie on the Extracellular side of the membrane. N29 and N62 each carry an N-linked (GlcNAc...) asparagine glycan. A helical transmembrane segment spans residues 81–102 (YINTVISCTIFIVGMVGNATLL). Residues 103-112 (RIIYQNKCMR) lie on the Cytoplasmic side of the membrane. The chain crosses the membrane as a helical span at residues 113–132 (NGPNALIASLALGDLIYVVI). At 133 to 159 (DLPINVFKLLAGRWPFEQNDFGVFLCK) the chain is on the extracellular side. C158 and C239 are oxidised to a cystine. Residues 160 to 181 (LFPFLQKSSVGITVLNLCALSV) traverse the membrane as a helical segment. Residues 182–205 (DRYRAVASWSRVQGIGIPLVTAIE) are Cytoplasmic-facing. Residues 206–229 (IVSIWILSFILAIPEAIGFVMVPF) form a helical membrane-spanning segment. At 230 to 256 (EYKGAQHRTCMLNATSKFMEFYQDVKD) the chain is on the extracellular side. A helical membrane pass occupies residues 257–278 (WWLFGFYFCMPLVCTAIFYTLM). Residues 279–306 (TCEMLNRRNGSLRIALSEHLKQRREVAK) lie on the Cytoplasmic side of the membrane. A helical transmembrane segment spans residues 307–328 (TVFCLVVIFALCWFPLHLSRIL). Residues 329–347 (KKTVYDEMDTNRCELLSFL) lie on the Extracellular side of the membrane. The chain crosses the membrane as a helical span at residues 348-372 (LLMDYIGINLATMNSCINPIALYFV). Topologically, residues 373-427 (SKKFKNCFQSCLCCCCYQSKSLMTSVPMNGTSIQWKNHEQNNHNTERSSHKDSIN) are cytoplasmic. Position 425 is a phosphoserine (S425).

It belongs to the G-protein coupled receptor 1 family. Endothelin receptor subfamily. EDNRA sub-subfamily. Interacts with HDAC7 and KAT5.

The protein resides in the cell membrane. In terms of biological role, receptor for endothelin-1. Mediates its action by association with G proteins that activate a phosphatidylinositol-calcium second messenger system. The rank order of binding affinities for ET-A is: ET1 &gt; ET2 &gt;&gt; ET3. The sequence is that of Endothelin-1 receptor from Bos taurus (Bovine).